The following is a 200-amino-acid chain: Large ribosomal subunit protein uL4 (200 aa).

The disordered stretch occupies residues 43–72 (RAQKTRAEVSGSGKKPWRQKGTGRARSGDI).

Belongs to the universal ribosomal protein uL4 family. As to quaternary structure, part of the 50S ribosomal subunit.

Its function is as follows. One of the primary rRNA binding proteins, this protein initially binds near the 5'-end of the 23S rRNA. It is important during the early stages of 50S assembly. It makes multiple contacts with different domains of the 23S rRNA in the assembled 50S subunit and ribosome. Forms part of the polypeptide exit tunnel. The sequence is that of Large ribosomal subunit protein uL4 from Haemophilus ducreyi (strain 35000HP / ATCC 700724).